A 305-amino-acid polypeptide reads, in one-letter code: Ribosomal RNA large subunit methyltransferase F (305 aa).

It belongs to the methyltransferase superfamily. METTL16/RlmF family.

Its subcellular location is the cytoplasm. It carries out the reaction adenosine(1618) in 23S rRNA + S-adenosyl-L-methionine = N(6)-methyladenosine(1618) in 23S rRNA + S-adenosyl-L-homocysteine + H(+). Functionally, specifically methylates the adenine in position 1618 of 23S rRNA. This chain is Ribosomal RNA large subunit methyltransferase F, found in Bacteroides fragilis (strain YCH46).